Consider the following 374-residue polypeptide: MTADEEETFTTFNEFRSDTFTVPTRAMVEDGFMNATFGDSVYQEDETTLRLESKMCEITGKPAALFCVSGTMSNQIGLRANLVQPPYSILCDYRAHVFLHEAGGLATLSQAMVHPVRPSNGNYLTFEDVLGNVTYDDDGDIHAAPTKVISLENTLHGIIIPIEEIRKISEFCRENDIRLHLDGARLWNASVATGISIKEYCSYFDSVSLCLSKSLGAPIGSVLVGDEKFIRKANHFKKQSGGGIRQAGIMSAMAIHAIDYNLSKLELSHNYAKQIGDFCQEHGIKLESPVDTSLVFLDLKANKMDPNRLVELGRTKYNVKLMGQRIACHFQLSQESVDNVKKCILECLEYHQKHPHKDDGRNNKKMYSLDAIKK.

Lys213 bears the N6-(pyridoxal phosphate)lysine mark. The segment at His354–Lys374 is disordered.

Belongs to the threonine aldolase family. In terms of assembly, homotetramer. The cofactor is pyridoxal 5'-phosphate.

The catalysed reaction is L-threonine = acetaldehyde + glycine. The enzyme catalyses L-allo-threonine = acetaldehyde + glycine. Its pathway is amino-acid degradation; L-threonine degradation via aldolase pathway; acetaldehyde and glycine from L-threonine: step 1/1. The protein is Low-specificity L-threonine aldolase (GLY1) of Candida albicans (Yeast).